The sequence spans 640 residues: Serine/threonine-protein phosphatase with EF-hands 1 (640 aa).

In terms of domain architecture, IQ spans 16-45 (VVRAALIIQNWYRRYRARLSARQHYALAIF). Positions 122–445 (INLLLQAFKQ…PQFFQYQVTS (324 aa)) are catalytic. Asp173, His175, Asp202, and Asn234 together coordinate Mn(2+). The active-site Proton donor is the His235. Residues His286 and His393 each contribute to the Mn(2+) site. 3 EF-hand domains span residues 473–508 (ARKTDLINAFELRDHSRTGKISLAQWAFSMESILGL), 556–591 (RYRSDLKIIFNIIDTDQSGLISMDEFRTMWKLFNAH), and 596–631 (IDDSQIDELASTMDSNKDGNIDFNEFLRAFYVVHKY). Ca(2+) is bound by residues Asp569, Asp571, Ser573, Glu580, Asp609, Asn611, Asp613, Asn615, and Glu620.

Belongs to the PPP phosphatase family. Mn(2+) serves as cofactor. Mg(2+) is required as a cofactor.

It catalyses the reaction O-phospho-L-seryl-[protein] + H2O = L-seryl-[protein] + phosphate. The catalysed reaction is O-phospho-L-threonyl-[protein] + H2O = L-threonyl-[protein] + phosphate. Activated by calcium. Functionally, may have a role in the recovery or adaptation response of photoreceptors. May have a role in development. The chain is Serine/threonine-protein phosphatase with EF-hands 1 (Ppef1) from Rattus norvegicus (Rat).